We begin with the raw amino-acid sequence, 1131 residues long: DNA-directed RNA polymerase subunit beta (1131 aa).

The interval 1108–1131 is disordered; sequence QLARRTPPRPTYESLSRESLDDDE. Positions 1122-1131 are enriched in basic and acidic residues; the sequence is LSRESLDDDE.

Belongs to the RNA polymerase beta chain family. In cyanobacteria the RNAP catalytic core is composed of 2 alpha, 1 beta, 1 beta', 1 gamma and 1 omega subunit. When a sigma factor is associated with the core the holoenzyme is formed, which can initiate transcription.

It catalyses the reaction RNA(n) + a ribonucleoside 5'-triphosphate = RNA(n+1) + diphosphate. Functionally, DNA-dependent RNA polymerase catalyzes the transcription of DNA into RNA using the four ribonucleoside triphosphates as substrates. The chain is DNA-directed RNA polymerase subunit beta from Nostoc sp. (strain PCC 7120 / SAG 25.82 / UTEX 2576).